The primary structure comprises 239 residues: MGKRIIPQRRGKASPVFKTPDHIHVAPARYPLLDPSKTYKAVVEDLVHDPGRWVPLAQVKLETGLVFYVPAVEGMYAGQIIEIGPGAKPVNGNILPVGMIPEGMQVVNIEKRPGDGGKFVRASGTYAVIVGRAGGKTQVQLPSGRVIEVPNESRAMIGVIAGGGRLEKPLLKAGAAYYKWSAKSRVWPKVRGVAMNAAFHPHGGGSHQHVGRPSTVARNTPPGRKVGHIAARRTGRRKG.

A disordered region spans residues 202-239 (HGGGSHQHVGRPSTVARNTPPGRKVGHIAARRTGRRKG). The span at 225-239 (KVGHIAARRTGRRKG) shows a compositional bias: basic residues.

The protein belongs to the universal ribosomal protein uL2 family. Part of the 50S ribosomal subunit. Forms a bridge to the 30S subunit in the 70S ribosome.

In terms of biological role, one of the primary rRNA binding proteins. Required for association of the 30S and 50S subunits to form the 70S ribosome, for tRNA binding and peptide bond formation. It has been suggested to have peptidyltransferase activity; this is somewhat controversial. Makes several contacts with the 16S rRNA in the 70S ribosome. The chain is Large ribosomal subunit protein uL2 from Desulfurococcus amylolyticus (strain DSM 18924 / JCM 16383 / VKM B-2413 / 1221n) (Desulfurococcus kamchatkensis).